The chain runs to 808 residues: Dynamin-related protein 3A (808 aa).

Positions 1 to 31 (MTIEEVSGETPPSTPPSSSTPSPSSSTTNAA) are disordered. Over residues 16–28 (PSSSTPSPSSSTT) the composition is skewed to low complexity. The Dynamin-type G domain maps to 56–330 (TIALPQVVVV…LVQHIKVLLP (275 aa)). Positions 66 to 73 (GSQSSGKS) are G1 motif. Residue 66 to 73 (GSQSSGKS) coordinates GTP. The tract at residues 92–94 (CTR) is G2 motif. Residues 172-175 (DLPG) are G3 motif. GTP contacts are provided by residues 172–176 (DLPGI) and 241–244 (TKLD). Residues 241-244 (TKLD) are G4 motif. Positions 271 to 274 (VNRC) are G5 motif. The disordered stretch occupies residues 548–578 (IPHPVARPKDTVEPDRTSSSTSQVKSRSFLG). Positions 554-563 (RPKDTVEPDR) are enriched in basic and acidic residues. A compositionally biased stretch (low complexity) spans 564–575 (TSSSTSQVKSRS). Residues 670–761 (IQITKLLLRS…TLDELPLEAD (92 aa)) enclose the GED domain. Residues 774–808 (LTSSKYSTSSSYSASPSTTRRSRRAGDQHQNGYGF) are disordered. Residues 775-792 (TSSKYSTSSSYSASPSTT) are compositionally biased toward low complexity.

This sequence belongs to the TRAFAC class dynamin-like GTPase superfamily. Dynamin/Fzo/YdjA family. Homooligomer. Interacts with ARC5 on peroxisomes and ELM1 on mitochondria. As to expression, ubiquitous. Preferentially expressed in flowers.

It localises to the mitochondrion. It is found in the peroxisome. Involved in the control of mitochondrial and peroxisomal division and morphology. In association with PEX11C, PEX11D, PEX11E and FIS1B, is involved in cell cycle-associated constitutive self-replication of preexisting peroxisomes. This is Dynamin-related protein 3A (DRP3A) from Arabidopsis thaliana (Mouse-ear cress).